The following is a 459-amino-acid chain: Chromosomal replication initiator protein DnaA (459 aa).

The domain I, interacts with DnaA modulators stretch occupies residues 1-74 (MQKIETFWHF…DEMAQDHFNE (74 aa)). Positions 74–122 (ERISFRLELREPAESEAQTVRTSAQKNREDKKPAAEKTQGVTSRKTNPS) are domain II. The interval 87–122 (ESEAQTVRTSAQKNREDKKPAAEKTQGVTSRKTNPS) is disordered. The segment covering 89–98 (EAQTVRTSAQ) has biased composition (polar residues). Residues 99–108 (KNREDKKPAA) are compositionally biased toward basic and acidic residues. Over residues 112–122 (QGVTSRKTNPS) the composition is skewed to polar residues. The segment at 123–339 (QLNASFTFDA…GALKRVLAFS (217 aa)) is domain III, AAA+ region. The ATP site is built by glycine 167, glycine 169, lysine 170, and threonine 171. Residues 340-459 (RFTGHSISLD…FNALMHILRG (120 aa)) form a domain IV, binds dsDNA region.

Belongs to the DnaA family. As to quaternary structure, oligomerizes as a right-handed, spiral filament on DNA at oriC.

The protein localises to the cytoplasm. Functionally, plays an essential role in the initiation and regulation of chromosomal replication. ATP-DnaA binds to the origin of replication (oriC) to initiate formation of the DNA replication initiation complex once per cell cycle. Binds the DnaA box (a 9 base pair repeat at the origin) and separates the double-stranded (ds)DNA. Forms a right-handed helical filament on oriC DNA; dsDNA binds to the exterior of the filament while single-stranded (ss)DNA is stabiized in the filament's interior. The ATP-DnaA-oriC complex binds and stabilizes one strand of the AT-rich DNA unwinding element (DUE), permitting loading of DNA polymerase. After initiation quickly degrades to an ADP-DnaA complex that is not apt for DNA replication. Binds acidic phospholipids. The polypeptide is Chromosomal replication initiator protein DnaA (Nitrosomonas europaea (strain ATCC 19718 / CIP 103999 / KCTC 2705 / NBRC 14298)).